A 303-amino-acid polypeptide reads, in one-letter code: Probable 5-dehydro-4-deoxyglucarate dehydratase (303 aa).

This sequence belongs to the DapA family.

The enzyme catalyses 5-dehydro-4-deoxy-D-glucarate + H(+) = 2,5-dioxopentanoate + CO2 + H2O. The protein operates within carbohydrate acid metabolism; D-glucarate degradation; 2,5-dioxopentanoate from D-glucarate: step 2/2. In Paracidovorax citrulli (strain AAC00-1) (Acidovorax citrulli), this protein is Probable 5-dehydro-4-deoxyglucarate dehydratase.